A 67-amino-acid chain; its full sequence is Large ribosomal subunit protein bL35 (67 aa).

Belongs to the bacterial ribosomal protein bL35 family.

The polypeptide is Large ribosomal subunit protein bL35 (Sphingopyxis alaskensis (strain DSM 13593 / LMG 18877 / RB2256) (Sphingomonas alaskensis)).